The primary structure comprises 649 residues: Threonine--tRNA ligase (649 aa).

The region spanning Met1–Thr60 is the TGS domain. The catalytic stretch occupies residues Asp248–Pro544. Residues Cys341, His392, and His521 each coordinate Zn(2+).

This sequence belongs to the class-II aminoacyl-tRNA synthetase family. In terms of assembly, homodimer. It depends on Zn(2+) as a cofactor.

Its subcellular location is the cytoplasm. It catalyses the reaction tRNA(Thr) + L-threonine + ATP = L-threonyl-tRNA(Thr) + AMP + diphosphate + H(+). Catalyzes the attachment of threonine to tRNA(Thr) in a two-step reaction: L-threonine is first activated by ATP to form Thr-AMP and then transferred to the acceptor end of tRNA(Thr). Also edits incorrectly charged L-seryl-tRNA(Thr). In Deinococcus deserti (strain DSM 17065 / CIP 109153 / LMG 22923 / VCD115), this protein is Threonine--tRNA ligase.